The chain runs to 196 residues: ATP-dependent Clp protease proteolytic subunit (196 aa).

The Nucleophile role is filled by serine 101. The active site involves histidine 126.

It belongs to the peptidase S14 family. Component of the chloroplastic Clp protease core complex.

It localises to the plastid. It is found in the chloroplast stroma. It carries out the reaction Hydrolysis of proteins to small peptides in the presence of ATP and magnesium. alpha-casein is the usual test substrate. In the absence of ATP, only oligopeptides shorter than five residues are hydrolyzed (such as succinyl-Leu-Tyr-|-NHMec, and Leu-Tyr-Leu-|-Tyr-Trp, in which cleavage of the -Tyr-|-Leu- and -Tyr-|-Trp bonds also occurs).. In terms of biological role, cleaves peptides in various proteins in a process that requires ATP hydrolysis. Has a chymotrypsin-like activity. Plays a major role in the degradation of misfolded proteins. The sequence is that of ATP-dependent Clp protease proteolytic subunit from Gossypium barbadense (Sea Island cotton).